Consider the following 93-residue polypeptide: Cytochrome c (93 aa).

Over residues 1–13 (AALPPGDAAAAQG) the composition is skewed to low complexity. The tract at residues 1 to 21 (AALPPGDAAAAQGGSNGVGPN) is disordered. Met70 is a binding site for heme c.

It belongs to the cytochrome c family. Binds 1 heme c group covalently per subunit.

Its subcellular location is the mitochondrion intermembrane space. In terms of biological role, electron carrier protein. The oxidized form of the cytochrome c heme group can accept an electron from the heme group of the cytochrome c1 subunit of cytochrome reductase. Cytochrome c then transfers this electron to the cytochrome oxidase complex, the final protein carrier in the mitochondrial electron-transport chain. This is Cytochrome c from Trypanosoma brucei brucei.